The following is a 122-amino-acid chain: Large ribosomal subunit protein uL14 (122 aa).

It belongs to the universal ribosomal protein uL14 family. Part of the 50S ribosomal subunit. Forms a cluster with proteins L3 and L19. In the 70S ribosome, L14 and L19 interact and together make contacts with the 16S rRNA in bridges B5 and B8.

Functionally, binds to 23S rRNA. Forms part of two intersubunit bridges in the 70S ribosome. This is Large ribosomal subunit protein uL14 from Marinobacter nauticus (strain ATCC 700491 / DSM 11845 / VT8) (Marinobacter aquaeolei).